A 299-amino-acid chain; its full sequence is Glycine--tRNA ligase alpha subunit (299 aa).

This sequence belongs to the class-II aminoacyl-tRNA synthetase family. In terms of assembly, tetramer of two alpha and two beta subunits.

It is found in the cytoplasm. It catalyses the reaction tRNA(Gly) + glycine + ATP = glycyl-tRNA(Gly) + AMP + diphosphate. The sequence is that of Glycine--tRNA ligase alpha subunit from Dictyoglomus thermophilum (strain ATCC 35947 / DSM 3960 / H-6-12).